Reading from the N-terminus, the 406-residue chain is Argininosuccinate synthase (406 aa).

ATP-binding positions include 11-19 (AYSGGLDTS) and A38. Positions 91 and 96 each coordinate L-citrulline. G121 provides a ligand contact to ATP. Residues T123, N127, and D128 each contribute to the L-aspartate site. Residue N127 coordinates L-citrulline. The L-citrulline site is built by R131, S181, S190, E266, and Y278.

Belongs to the argininosuccinate synthase family. Type 1 subfamily. As to quaternary structure, homotetramer.

It localises to the cytoplasm. It catalyses the reaction L-citrulline + L-aspartate + ATP = 2-(N(omega)-L-arginino)succinate + AMP + diphosphate + H(+). It participates in amino-acid biosynthesis; L-arginine biosynthesis; L-arginine from L-ornithine and carbamoyl phosphate: step 2/3. This is Argininosuccinate synthase from Campylobacter jejuni (strain RM1221).